The chain runs to 1002 residues: Calcium-transporting ATPase sarcoplasmic/endoplasmic reticulum type (1002 aa).

Topologically, residues 1 to 48 (MEDGHSKTVEQSLNFFGTDGERGLTLDQIKTNQAKYGPNELPTEEGKS) are cytoplasmic. A helical membrane pass occupies residues 49–69 (IWQLVLEQFDDLLVKILLLAA). The Lumenal segment spans residues 70 to 89 (IISFVLALFEEHEETFTAFV). The helical transmembrane segment at 90 to 110 (EPLVILLILIANAVVGVWQER) threads the bilayer. The Cytoplasmic portion of the chain corresponds to 111–253 (NAESAIEALK…EIKTPLQQKL (143 aa)). Residues 254 to 273 (DEFGEQLSKVISVICVAVWA) traverse the membrane as a helical segment. At 274–295 (INIGHFNDPAHGGSWIKGAIYY) the chain is on the lumenal side. A helical transmembrane segment spans residues 296 to 313 (FKIAVALAVAAIPEGLPA). Ca(2+) contacts are provided by valine 304, alanine 305, isoleucine 307, and glutamate 309. Residues 314 to 757 (VITTCLALGT…EEGRAIYNNM (444 aa)) lie on the Cytoplasmic side of the membrane. The active-site 4-aspartylphosphate intermediate is the aspartate 351. The Mg(2+) site is built by aspartate 703 and aspartate 707. Residues 758–777 (KQFIRYLISSNIGEVVSIFL) form a helical membrane-spanning segment. Positions 768 and 771 each coordinate Ca(2+). Over 778-787 (TAALGLPEAL) the chain is Lumenal. A helical membrane pass occupies residues 788-808 (IPVQLLWVNLVTDGLPATALG). Residues asparagine 796, threonine 799, and aspartate 800 each contribute to the Ca(2+) site. Over 809–828 (FNPPDLDIMDKPPRKADEGL) the chain is Cytoplasmic. Residues 829-851 (ISGWLFFRYMAIGFYVGAATVGA) form a helical membrane-spanning segment. Topologically, residues 852–897 (AAWWFIASSEGPGLTYWQLTHHLSCLGGGDEFKGVDCKIFSDPKAM) are lumenal. A helical transmembrane segment spans residues 898–917 (TMALSVLVTIEMLNAMNSLS). Glutamate 908 contacts Ca(2+). At 918-930 (ENQSLISMPPWCN) the chain is on the cytoplasmic side. Residues 931 to 949 (LWLIGSMALSFTLHFVILY) traverse the membrane as a helical segment. Topologically, residues 950 to 964 (VDVLSTVFQVTPLSA) are lumenal. Residues 965 to 985 (EEWITVMKFSIPVVLLDETLK) traverse the membrane as a helical segment. Over 986–1002 (FVARKIADVPDAVVDKW) the chain is Cytoplasmic.

This sequence belongs to the cation transport ATPase (P-type) (TC 3.A.3) family.

It is found in the endoplasmic reticulum membrane. The protein localises to the sarcoplasmic reticulum membrane. The enzyme catalyses Ca(2+)(in) + ATP + H2O = Ca(2+)(out) + ADP + phosphate + H(+). This magnesium-dependent enzyme catalyzes the hydrolysis of ATP coupled with the transport of calcium. This chain is Calcium-transporting ATPase sarcoplasmic/endoplasmic reticulum type, found in Drosophila pseudoobscura pseudoobscura (Fruit fly).